The primary structure comprises 115 residues: Large ribosomal subunit protein bL21 (115 aa).

It belongs to the bacterial ribosomal protein bL21 family. In terms of assembly, part of the 50S ribosomal subunit. Contacts protein L20.

This protein binds to 23S rRNA in the presence of protein L20. This Coxiella burnetii (strain Dugway 5J108-111) protein is Large ribosomal subunit protein bL21.